A 92-amino-acid polypeptide reads, in one-letter code: Small ribosomal subunit protein uS19 (92 aa).

It belongs to the universal ribosomal protein uS19 family.

Protein S19 forms a complex with S13 that binds strongly to the 16S ribosomal RNA. In Klebsiella pneumoniae (strain 342), this protein is Small ribosomal subunit protein uS19.